A 293-amino-acid polypeptide reads, in one-letter code: 4-hydroxy-tetrahydrodipicolinate synthase (293 aa).

T45 lines the pyruvate pocket. The Proton donor/acceptor role is filled by Y133. The active-site Schiff-base intermediate with substrate is the K161. I203 contacts pyruvate.

Belongs to the DapA family. Homotetramer; dimer of dimers.

It localises to the cytoplasm. The enzyme catalyses L-aspartate 4-semialdehyde + pyruvate = (2S,4S)-4-hydroxy-2,3,4,5-tetrahydrodipicolinate + H2O + H(+). It participates in amino-acid biosynthesis; L-lysine biosynthesis via DAP pathway; (S)-tetrahydrodipicolinate from L-aspartate: step 3/4. Catalyzes the condensation of (S)-aspartate-beta-semialdehyde [(S)-ASA] and pyruvate to 4-hydroxy-tetrahydrodipicolinate (HTPA). In Aliivibrio fischeri (strain ATCC 700601 / ES114) (Vibrio fischeri), this protein is 4-hydroxy-tetrahydrodipicolinate synthase.